A 131-amino-acid polypeptide reads, in one-letter code: MATVPTRSGSPRQLTTKQTGDAWEAQARRWLEGKGLRFIAANVNERGGEIDLIMREGRTTIFIEVRYRRSALYGGAAASVTRSKQHKLLQTARLWLARHNGSFDTVDCRFDVVAFTGNEVEWIKDAFNDHS.

Residues 1-19 are compositionally biased toward polar residues; that stretch reads MATVPTRSGSPRQLTTKQT. A disordered region spans residues 1-21; the sequence is MATVPTRSGSPRQLTTKQTGD.

It belongs to the UPF0102 family.

This is UPF0102 protein YraN from Escherichia coli O127:H6 (strain E2348/69 / EPEC).